A 280-amino-acid chain; its full sequence is Ribose-phosphate pyrophosphokinase (280 aa).

Residues 32–34 and 89–90 contribute to the ATP site; these read DGE and RQ. Mg(2+) contacts are provided by His-122 and Asp-160. The active site involves Lys-183. Residues Arg-185, Asp-209, and 213–217 each bind D-ribose 5-phosphate; that span reads STGGT.

This sequence belongs to the ribose-phosphate pyrophosphokinase family. Class III (archaeal) subfamily. Mg(2+) is required as a cofactor.

It is found in the cytoplasm. The enzyme catalyses D-ribose 5-phosphate + ATP = 5-phospho-alpha-D-ribose 1-diphosphate + AMP + H(+). The protein operates within metabolic intermediate biosynthesis; 5-phospho-alpha-D-ribose 1-diphosphate biosynthesis; 5-phospho-alpha-D-ribose 1-diphosphate from D-ribose 5-phosphate (route I): step 1/1. With respect to regulation, activated by Co(2+) and Ni(2+) ions, however Mg(2+) ion shows almost no significant effect on the activity. Equally inhibited by ADP, CTP and GTP, while dTTP and UTP are less inhibitory. In terms of biological role, involved in the biosynthesis of the central metabolite phospho-alpha-D-ribosyl-1-pyrophosphate (PRPP) via the transfer of pyrophosphoryl group from ATP to 1-hydroxyl of ribose-5-phosphate (Rib-5-P). It can also use CTP and GTP as substrates in addition to ATP. This is Ribose-phosphate pyrophosphokinase from Thermococcus kodakarensis (strain ATCC BAA-918 / JCM 12380 / KOD1) (Pyrococcus kodakaraensis (strain KOD1)).